A 73-amino-acid chain; its full sequence is EAGEDCDCGSPANPCCDAATCKLLPGAQCGEGLCCDQCSFMKKGTICRRARGDDLDDYCNGISAGCPRNPLHA.

Residues glutamate 1 to alanine 73 form the Disintegrin domain. 6 disulfide bridges follow: cysteine 6–cysteine 21, cysteine 8–cysteine 16, cysteine 15–cysteine 38, cysteine 29–cysteine 35, cysteine 34–cysteine 59, and cysteine 47–cysteine 66. The short motif at arginine 51–aspartate 53 is the Cell attachment site element.

It belongs to the venom metalloproteinase (M12B) family. P-II subfamily. P-IIa sub-subfamily. As to quaternary structure, monomer (disintegrin). In terms of tissue distribution, expressed by the venom gland.

The protein localises to the secreted. Its function is as follows. Inhibits fibrinogen interaction with platelets. Acts by binding to alpha-IIb/beta-3 (ITGA2B/ITGB3) on the platelet surface and inhibits aggregation induced by ADP, thrombin, platelet-activating factor and collagen. In Craspedocephalus gramineus (Bamboo pit viper), this protein is Disintegrin trigramin-gamma.